We begin with the raw amino-acid sequence, 630 residues long: NUAK family SNF1-like kinase 2 (630 aa).

The residue at position 1 (methionine 1) is an N-acetylmethionine. Residues 57 to 307 enclose the Protein kinase domain; the sequence is YEFLETLGKG…LEDVASHWWV (251 aa). Residues 63-71 and lysine 85 each bind ATP; that span reads LGKGTYGKV. The Proton acceptor role is filled by aspartate 179. Residue threonine 212 is modified to Phosphothreonine. Disordered regions lie at residues 361–504 and 521–566; these read HVPG…RLHR and GTAP…LDLP. The span at 464 to 476 shows a compositional bias: low complexity; it reads SGYYSSPEPSESG. 4 positions are modified to phosphoserine: serine 529, serine 550, serine 553, and serine 579.

The protein belongs to the protein kinase superfamily. CAMK Ser/Thr protein kinase family. SNF1 subfamily. The cofactor is Mg(2+). Post-translationally, phosphorylated at Thr-212 by STK11/LKB1 in complex with STE20-related adapter-alpha (STRADA) pseudo kinase and CAB39. Autophosphorylation is also possible at Thr-212. In terms of tissue distribution, expressed in liver, skin, testis, uterus, ovary, adrenal gland and brain (at protein level). Expressed in kidney, heart, skin, spleen, lung, uterus, liver and the exocrine and endocrine compartments of the human pancreas. A kinase-inactive isoform also appears to be expressed in the skin, spleen, lung, uterus, liver and testis.

The catalysed reaction is L-seryl-[protein] + ATP = O-phospho-L-seryl-[protein] + ADP + H(+). The enzyme catalyses L-threonyl-[protein] + ATP = O-phospho-L-threonyl-[protein] + ADP + H(+). Its activity is regulated as follows. Activated by phosphorylation on Thr-212 by STK11 in complex with STE20-related adapter-alpha (STRAD alpha) pseudo kinase and CAB39. Its function is as follows. Stress-activated kinase involved in tolerance to glucose starvation. Induces cell-cell detachment by increasing F-actin conversion to G-actin. Expression is induced by CD95 or TNF-alpha, via NF-kappa-B. Protects cells from CD95-mediated apoptosis and is required for the increased motility and invasiveness of CD95-activated tumor cells. Phosphorylates LATS1 and LATS2. Plays a key role in neural tube closure during embryonic development through LATS2 phosphorylation and regulation of the nuclear localization of YAP1 a critical downstream regulatory target in the Hippo signaling pathway. The polypeptide is NUAK family SNF1-like kinase 2 (Rattus norvegicus (Rat)).